We begin with the raw amino-acid sequence, 189 residues long: Autophagy receptor ATG45 (189 aa).

Positions 1-96 (MSNFLLVIPE…TNNILHFKDN (96 aa)) are binds glycogen. The required for sequestration into autophagosomes stretch occupies residues 97–189 (EASQLMDIPL…AKKVKTYWNK (93 aa)). Position 107 is a phosphoserine (serine 107). The short motif at 127–130 (YVNL) is the ATG8 interaction motif (AIM) element. A Phosphoserine modification is found at serine 172. Positions 176–187 (LMCIAKKVKTYW) are may facilitate interactions with the autophagosome membrane.

As to quaternary structure, interacts with ATG8.

Its subcellular location is the cytoplasm. The protein resides in the cytosol. It localises to the cytoplasmic vesicle. It is found in the autophagosome. In terms of biological role, autophagy receptor for glycogen that facilitates the sequestration of glycogen assemblies into autophagosomes as part of bulk autophagy; the autophagy of glycogen (glycophagy) is stimulated during prolonged nitrogen starvation and during sporulation. The sequence is that of Autophagy receptor ATG45 from Saccharomyces cerevisiae (strain ATCC 204508 / S288c) (Baker's yeast).